Consider the following 746-residue polypeptide: Exostosin-1 (746 aa).

The Cytoplasmic portion of the chain corresponds to 1 to 5; it reads MQAKK. A helical; Signal-anchor for type II membrane protein transmembrane segment spans residues 6 to 26; it reads RYFILLSAGSCLALLFYFGGV. Over 27 to 746 the chain is Lumenal; it reads QFRASRSHSR…RKKYRDIERL (720 aa). Asn89 is a glycosylation site (N-linked (GlcNAc...) asparagine). 2 disulfide bridges follow: Cys98–Cys103 and Cys109–Cys152. 2 residues coordinate a protein: Leu166 and Tyr203. UDP-binding residues include Lys267, Lys269, Tyr271, and Arg280. Residues Cys298 and Cys312 are joined by a disulfide bond. His300 contacts a protein. UDP is bound by residues Tyr319 and Tyr324. The N-linked (GlcNAc...) asparagine glycan is linked to Asn330. 2 disulfides stabilise this stretch: Cys334-Cys355 and Cys652-Cys704. UDP is bound by residues Arg346 and Glu349.

Belongs to the glycosyltransferase 47 family. Part of the heparan sulfate polymerase, a dimeric complex composed of EXT1 and EXT2. Could also form homooligomeric complexes. Interacts with NDST1. N-glycosylated.

The protein resides in the golgi apparatus membrane. It localises to the golgi apparatus. The protein localises to the cis-Golgi network membrane. It is found in the endoplasmic reticulum membrane. The enzyme catalyses 3-O-{alpha-D-GlcNAc-[(1-&gt;4)-beta-D-GlcA-(1-&gt;4)-alpha-D-GlcNAc](n)-(1-&gt;4)-beta-D-GlcA-(1-&gt;3)-beta-D-Gal-(1-&gt;3)-beta-D-Gal-(1-&gt;4)-beta-D-Xyl}-L-seryl-[protein] + UDP-alpha-D-glucuronate = 3-O-{[(1-&gt;4)-beta-D-GlcA-(1-&gt;4)-alpha-D-GlcNAc](n+1)-(1-&gt;4)-beta-D-GlcA-(1-&gt;3)-beta-D-Gal-(1-&gt;3)-beta-D-Gal-(1-&gt;4)-beta-D-Xyl}-L-seryl-[protein] + UDP + H(+). The protein operates within protein modification; protein glycosylation. Functionally, glycosyltransferase forming with EXT2 the heterodimeric heparan sulfate polymerase which catalyzes the elongation of the heparan sulfate glycan backbone. Glycan backbone extension consists in the alternating transfer of (1-&gt;4)-beta-D-GlcA and (1-&gt;4)-alpha-D-GlcNAc residues from their respective UDP-sugar donors. Both EXT1 and EXT2 are required for the full activity of the polymerase since EXT1 bears the N-acetylglucosaminyl-proteoglycan 4-beta-glucuronosyltransferase activity within the complex while EXT2 carries the glucuronosyl-N-acetylglucosaminyl-proteoglycan 4-alpha-N-acetylglucosaminyltransferase activity. Heparan sulfate proteoglycans are ubiquitous components of the extracellular matrix and play an important role in tissue homeostasis and signaling. In Cricetulus griseus (Chinese hamster), this protein is Exostosin-1.